We begin with the raw amino-acid sequence, 184 residues long: ATP synthase subunit delta (184 aa).

It belongs to the ATPase delta chain family. As to quaternary structure, F-type ATPases have 2 components, F(1) - the catalytic core - and F(0) - the membrane proton channel. F(1) has five subunits: alpha(3), beta(3), gamma(1), delta(1), epsilon(1). CF(0) has four main subunits: a(1), b(1), b'(1) and c(10-14). The alpha and beta chains form an alternating ring which encloses part of the gamma chain. F(1) is attached to F(0) by a central stalk formed by the gamma and epsilon chains, while a peripheral stalk is formed by the delta, b and b' chains.

It localises to the cellular thylakoid membrane. Its function is as follows. F(1)F(0) ATP synthase produces ATP from ADP in the presence of a proton or sodium gradient. F-type ATPases consist of two structural domains, F(1) containing the extramembraneous catalytic core and F(0) containing the membrane proton channel, linked together by a central stalk and a peripheral stalk. During catalysis, ATP synthesis in the catalytic domain of F(1) is coupled via a rotary mechanism of the central stalk subunits to proton translocation. In terms of biological role, this protein is part of the stalk that links CF(0) to CF(1). It either transmits conformational changes from CF(0) to CF(1) or is implicated in proton conduction. This chain is ATP synthase subunit delta, found in Synechococcus sp. (strain PCC 6716).